The sequence spans 371 residues: Putative RNA-binding protein Luc7-like 1 (371 aa).

Coiled coils occupy residues 87-177 and 220-256; these read MDHL…RNSM and QIRE…EERL. A compositionally biased stretch (basic and acidic residues) spans 232 to 257; the sequence is VAEKQEKRNQDRLRRREEREREERLG. The disordered stretch occupies residues 232-371; sequence VAEKQEKRNQ…RSEEKEAGEI (140 aa). Over residues 258–317 the composition is skewed to basic residues; the sequence is RRSGSRTRDRRRSRSRDRRRRRSRSTSRERRKFSRSRSRDRYRRHRSRSRSHSRGHRRAS. Composition is skewed to basic and acidic residues over residues 318–351 and 361–371; these read RDRS…DWRL and RRSEEKEAGEI. Phosphoserine occurs at positions 336 and 363.

It belongs to the Luc7 family.

Functionally, may bind to RNA via its Arg/Ser-rich domain. The sequence is that of Putative RNA-binding protein Luc7-like 1 (Luc7l) from Mus musculus (Mouse).